Here is a 154-residue protein sequence, read N- to C-terminus: Probable ubiquitin-conjugating enzyme E2 31 (154 aa).

The 146-residue stretch at 8-153 (KAAQRIAMEY…AREFTARHAN (146 aa)) folds into the UBC core domain. The Glycyl thioester intermediate role is filled by cysteine 91.

The protein belongs to the ubiquitin-conjugating enzyme family.

The enzyme catalyses S-ubiquitinyl-[E1 ubiquitin-activating enzyme]-L-cysteine + [E2 ubiquitin-conjugating enzyme]-L-cysteine = [E1 ubiquitin-activating enzyme]-L-cysteine + S-ubiquitinyl-[E2 ubiquitin-conjugating enzyme]-L-cysteine.. It participates in protein modification; protein ubiquitination. Accepts the ubiquitin from the E1 complex and catalyzes its covalent attachment to other proteins. The chain is Probable ubiquitin-conjugating enzyme E2 31 (UBC31) from Arabidopsis thaliana (Mouse-ear cress).